The chain runs to 397 residues: Elongation factor Tu (397 aa).

Residues 10–206 (KPHVNIGTIG…AVDESIPEPQ (197 aa)) form the tr-type G domain. Residues 19-26 (GHIDHGKT) form a G1 region. Residue 19–26 (GHIDHGKT) participates in GTP binding. Position 26 (Thr26) interacts with Mg(2+). The tract at residues 62–66 (GITIS) is G2. The tract at residues 83-86 (DCPG) is G3. GTP is bound by residues 83–87 (DCPGH) and 138–141 (NKAD). Residues 138 to 141 (NKAD) are G4. A G5 region spans residues 176 to 178 (SAL).

Belongs to the TRAFAC class translation factor GTPase superfamily. Classic translation factor GTPase family. EF-Tu/EF-1A subfamily. Monomer.

The protein localises to the cytoplasm. The enzyme catalyses GTP + H2O = GDP + phosphate + H(+). Functionally, GTP hydrolase that promotes the GTP-dependent binding of aminoacyl-tRNA to the A-site of ribosomes during protein biosynthesis. This chain is Elongation factor Tu, found in Frankia casuarinae (strain DSM 45818 / CECT 9043 / HFP020203 / CcI3).